The primary structure comprises 77 residues: Large ribosomal subunit protein uL29 (77 aa).

This sequence belongs to the universal ribosomal protein uL29 family.

This Mycobacterium avium (strain 104) protein is Large ribosomal subunit protein uL29.